The sequence spans 288 residues: MKLPIFIADAFTTKAFRGNPAAVCLLENKLDEDLHQKIAKEMNLSETAFIRKLHPNDNFTQSSCFGLRWFTPQNEVPLCGHATLASAAVLFHKIKNVHSTLTFVTMSGELKARKEEDGIVLDLPLYPAHPQKLHEVEDLIKTAIGDTLVQDVRYSPDTKKLLVRLSDTYNRSFLESLTVNTENLLQVETTGKVKGLILTLKGEPGGQTQAFDFYSRYFAPWYGVAEDPVTGSAHTVLSSYWSEQLGKKDLHAFQCSNRGGELTISLRSDGRVDIKGGAALVLEGTLTA.

Glu-46 is a catalytic residue.

Belongs to the PhzF family. In terms of assembly, interacts with UNRIP/MAWD.

In Bos taurus (Bovine), this protein is Phenazine biosynthesis-like domain-containing protein (PBLD).